The chain runs to 325 residues: Germination protease (325 aa).

A propeptide spanning residues 1-7 (MYNVRTD) is cleaved from the precursor.

The protein belongs to the peptidase A25 family. In terms of assembly, homotetramer. In terms of processing, autoproteolytically processed. The inactive tetrameric zymogen termed p46 autoprocesses to a smaller form termed p41, which is active only during spore germination.

The enzyme catalyses Endopeptidase action with P4 Glu or Asp, P1 preferably Glu &gt; Asp, P1' hydrophobic and P2' Ala.. Its function is as follows. Initiates the rapid degradation of small, acid-soluble proteins during spore germination. The polypeptide is Germination protease (Clostridium perfringens (strain SM101 / Type A)).